The sequence spans 867 residues: DNA endonuclease RBBP8 (867 aa).

An essential for binding to the MRN complex and for RPA focus formation on DNA damage region spans residues 25 to 48 (ELWSKLKECHDKELQELLLKINKL). 2 coiled-coil regions span residues 38–87 (LQEL…EDRL) and 120–141 (ITEL…SEQL). Disordered stretches follow at residues 141 to 171 (LHNM…PDSP) and 448 to 486 (RYGK…HSML). The segment covering 154 to 166 (ENPADTGEGEDGV) has biased composition (acidic residues). Residues 489-493 (PLDLS) carry the PXDLS motif motif. Residues 508–531 (SSRGRTKQTFALVPEKPDPKKPLH) form a damage-recruitment motif region. Phosphothreonine is present on residues Thr-817 and Thr-829. Residues 843-867 (SPCQRPRRRQPYNAKFSSKIKEQKT) form a disordered region.

It belongs to the COM1/SAE2/CtIP family. As to quaternary structure, homotetramer; formed by antiparallel association of helical extensions protruding from the N-termini of two parallel coiled-coil dimers. Interacts with the MRN complex; the interaction links DNA sensing to resection. Interacts with samhd1. In terms of processing, phosphorylation at Thr-817 and Thr-829 promote interaction with nbn and recruitment to double-strand breaks (DSBs).

The protein resides in the nucleus. Its subcellular location is the chromosome. Functionally, endonuclease that cooperates with the MRE11-RAD50-NBN (MRN) complex in DNA-end resection, the first step of double-strand break (DSB) repair through the homologous recombination (HR) pathway. Functions downstream of the MRN complex and ATM, promotes ATR activation and its recruitment to DSBs in the S/G2 phase facilitating the generation of ssDNA. Specifically promotes the endonuclease activity of the MRN complex to clear DNA ends containing protein adducts: recruited to DSBs by nbn following phosphorylation, and promotes the endonuclease of mre11 to clear protein-DNA adducts and generate clean double-strand break ends. This is DNA endonuclease RBBP8 (rbbp8) from Xenopus tropicalis (Western clawed frog).